A 362-amino-acid polypeptide reads, in one-letter code: Fe-S cluster assembly protein DRE2 (362 aa).

Residues 1-28 (MAPGLDLTPDFHPPTTTTTTTNNAPPQQ) form a disordered region. Positions 15–28 (TTTTTTTNNAPPQQ) are enriched in low complexity. The interval 24-165 (APPQQRTLLL…KPEYAEEEAV (142 aa)) is N-terminal SAM-like domain. Residues 166-254 (PLRFGKKKAA…EETLLTEEDL (89 aa)) form a linker region. 4 residues coordinate [2Fe-2S] cluster: cysteine 264, cysteine 275, cysteine 278, and cysteine 280. A fe-S binding site A region spans residues 264–280 (CQPQPGKKRRACKDCTC). Cysteine 325, cysteine 328, cysteine 336, and cysteine 339 together coordinate [4Fe-4S] cluster. 2 short sequence motifs (cx2C motif) span residues 325 to 328 (CGSC) and 336 to 339 (CSDC). Positions 325 to 339 (CGSCYLGDAFRCSDC) are fe-S binding site B.

The protein belongs to the anamorsin family. As to quaternary structure, monomer. Interacts with TAH18. Interacts with MIA40. [2Fe-2S] cluster is required as a cofactor. The cofactor is [4Fe-4S] cluster.

It is found in the cytoplasm. It localises to the mitochondrion intermembrane space. Component of the cytosolic iron-sulfur (Fe-S) protein assembly (CIA) machinery required for the maturation of extramitochondrial Fe-S proteins. Part of an electron transfer chain functioning in an early step of cytosolic Fe-S biogenesis, facilitating the de novo assembly of a [4Fe-4S] cluster on the scaffold complex CFD1-NBP35. Electrons are transferred to DRE2 from NADPH via the FAD- and FMN-containing protein TAH18. TAH18-DRE2 are also required for the assembly of the diferric tyrosyl radical cofactor of ribonucleotide reductase (RNR), probably by providing electrons for reduction during radical cofactor maturation in the catalytic small subunit RNR2. The sequence is that of Fe-S cluster assembly protein DRE2 from Chaetomium globosum (strain ATCC 6205 / CBS 148.51 / DSM 1962 / NBRC 6347 / NRRL 1970) (Soil fungus).